The sequence spans 225 residues: Sirohydrochlorin ferrochelatase, chloroplastic (225 aa).

Residues 1-46 constitute a chloroplast transit peptide; that stretch reads MTTQSQFLVNLSYGGLASQSNLRANNRVSPSSCQITRTNRSWALPV. Residues His89 and His155 each coordinate Fe cation. [4Fe-4S] cluster is bound by residues Cys199, Cys210, Cys213, and Cys219.

Belongs to the CbiX family. SirB subfamily. In terms of assembly, homodimer. [4Fe-4S] cluster serves as cofactor.

The protein resides in the plastid. It is found in the chloroplast. The catalysed reaction is siroheme + 2 H(+) = sirohydrochlorin + Fe(2+). It functions in the pathway porphyrin-containing compound metabolism; siroheme biosynthesis; siroheme from sirohydrochlorin: step 1/1. In terms of biological role, chelates iron to the siroheme precursor. Catalyzes the last step of the siroheme biosynthesis. Unlike its counterparts in bacteria, contains an [Fe-S] cluster which is not involved directly in the enzymatic reaction, but may play regulatory role in iron, sulfur and tetrapyrrole metabolism. The [Fe-S] cluster is required for normal plant growth. This is Sirohydrochlorin ferrochelatase, chloroplastic from Arabidopsis thaliana (Mouse-ear cress).